The primary structure comprises 1183 residues: 3-hydroxy-3-methylglutaryl-coenzyme A reductase (1183 aa).

Topologically, residues 1–245 (MAAILLPQRF…DLLKNAETLD (245 aa)) are cytoplasmic. In terms of domain architecture, SSD spans 245–426 (DIVIMLLGYI…FTFYTAILSI (182 aa)). A helical transmembrane segment spans residues 246–266 (IVIMLLGYIAMHLTFVSLFLS). Over 267–273 (MRKMGSK) the chain is Lumenal. Residues 274 to 294 (FWLGICTLFSSVFAFLFGLVV) traverse the membrane as a helical segment. The Cytoplasmic portion of the chain corresponds to 295–299 (TTKLG). The chain crosses the membrane as a helical span at residues 300–320 (VPISVILLSEGLPFLVVTIGF). Residues 321–378 (EKNIVLTRAVMSHAIEHRRIQAQNSKSGKRSPERSTQNMIQYAVQAAIKEKGFEIIRD) are Lumenal-facing. The helical transmembrane segment at 379–399 (YAIEIVILVIGAASGVQGGLQ) threads the bilayer. At 400–402 (QFC) the chain is on the cytoplasmic side. A helical membrane pass occupies residues 403–423 (FLAAWTLFFDFILLFTFYTAI). The Lumenal segment spans residues 424 to 482 (LSIKLEINRIKRHVDMRMALEDDGVSRRVAENVAKGDDELNRVRGDAPLFGRKSSSIPK). Residues 483–503 (FKVLMILGFIFVNIVNICSIP) form a helical membrane-spanning segment. At 504 to 1183 (FRNPSSMSTI…SAAAIQRSKR (680 aa)) the chain is on the cytoplasmic side. Glu-828 serves as the catalytic Charge relay system. 834–840 (SASRGCK) contributes to the CoA binding site. Residues 895-897 (SRF) and 922-930 (DAMGMNMIS) each bind NADP(+). The active-site Charge relay system is the Lys-962. 991–993 (VLK) is a CoA binding site. Residue Asp-1038 is the Charge relay system of the active site. 1133 to 1134 (AH) provides a ligand contact to CoA. His-1134 (proton donor) is an active-site residue. The interval 1136-1183 (QHNRSAAPSRSTTPAPPMTPVSLAMTSAQERSASTTSMSAAAIQRSKR) is disordered. Residue 1138–1139 (NR) coordinates NADP(+). 2 stretches are compositionally biased toward low complexity: residues 1139 to 1148 (RSAAPSRSTT) and 1167 to 1177 (SASTTSMSAAA).

It belongs to the HMG-CoA reductase family.

The protein localises to the endoplasmic reticulum membrane. It catalyses the reaction (R)-mevalonate + 2 NADP(+) + CoA = (3S)-3-hydroxy-3-methylglutaryl-CoA + 2 NADPH + 2 H(+). It participates in metabolic intermediate biosynthesis; (R)-mevalonate biosynthesis; (R)-mevalonate from acetyl-CoA: step 3/3. Its function is as follows. HMG-CoA reductase; part of the first module of ergosterol biosynthesis pathway that includes the early steps of the pathway, conserved across all eukaryotes, and which results in the formation of mevalonate from acetyl-coenzyme A (acetyl-CoA). In this module, the cytosolic acetyl-CoA acetyltransferase catalyzes the formation of acetoacetyl-CoA. The hydroxymethylglutaryl-CoA synthase then condenses acetyl-CoA with acetoacetyl-CoA to form HMG-CoA. The rate-limiting step of the early module is the reduction to mevalonate by the 3-hydroxy-3-methylglutaryl-coenzyme A (HMG-CoA) reductase HMGR. This is 3-hydroxy-3-methylglutaryl-coenzyme A reductase (HMGR) from Gibberella fujikuroi (strain CBS 195.34 / IMI 58289 / NRRL A-6831) (Bakanae and foot rot disease fungus).